Consider the following 139-residue polypeptide: MTEQTLVLIKPDGVSRGLVGEVLARIERKGLKIAALELKQVSDELAREHYAEHADKPFFGSLIEFITSGPVVAAVLEGPRAIAAFRQLAGGTDPVEKAAPGSIRGDFGLETQYNLVHGSDSPESAKREIGLWFPEFPVA.

ATP-binding residues include Lys10, Phe58, Arg86, Thr92, Arg104, and Asn114. His117 acts as the Pros-phosphohistidine intermediate in catalysis.

It belongs to the NDK family. As to quaternary structure, homotetramer. The cofactor is Mg(2+).

It is found in the cytoplasm. The enzyme catalyses a 2'-deoxyribonucleoside 5'-diphosphate + ATP = a 2'-deoxyribonucleoside 5'-triphosphate + ADP. It catalyses the reaction a ribonucleoside 5'-diphosphate + ATP = a ribonucleoside 5'-triphosphate + ADP. Functionally, major role in the synthesis of nucleoside triphosphates other than ATP. The ATP gamma phosphate is transferred to the NDP beta phosphate via a ping-pong mechanism, using a phosphorylated active-site intermediate. This chain is Nucleoside diphosphate kinase, found in Nocardia farcinica (strain IFM 10152).